The sequence spans 1270 residues: MFRAYGNNGLKNPERISGENPDLYTQTRAAVQQRATTTLKRNEKQKLAVQNDSVFQQVGIGESDSDDDNGGVRIRMSPHRYIDPDDVFTLPEVKKQNALRDAKIAARAAQATAYNTFPSVKSLNGCQDPPETSQQSTSRKRSASNSRSPSRSHSRRYDRDNGRQRSRSREKKRRKKERRRKRSSSRSSSSSRSRDRSSRARDTSSHTLMKMNKPAKYAFLTDEEYRTCDAYISSAFITQTKSDCENYTQGVPKKEIAKCRLSVKFIVGLEHNNILFNNIYGAEYARDKENRPFWEQLDRYLKDVPKETFFRYVPPVGGYWKIRDRVDLLNLDHIDDDVLANDSDNRKDAFTFELEQAKKTFSENVHNIDALIKVISMEEEMCRRNVGSFSSSNPAALAERHQEMVKKAIKADGRNAKLRLMKIELLIKMDPNSPTIIDDFKNLTITFPHEPMVWIKYLDYIQYDSNVYNYKKLKNAFEDCIRQVTGLTNGTLLSHLNAVNDRPLLRMFHLWIYIRYLKWMISCAHTPVVLANIQATFEYNFGLADVEKRTSTNSKEREVRLEEFWESGLPRIGDEGAVGAEKMLKQSEELSDEDIQKLENDDFDILISRTEETIATCLQAQRDVQISWIEVEREMMNIDARVKRTKLKDCELYEDHVDDLETCELWDIIPFDRIRYYEAPGDCANFDFVQPFLELLGVKFLNSTNCFTTTEQIISDWISNDSTVNFYKTPTYTEKKCFEVGNNILKFMLYNRLKLTENNPEYLDKTMVKYLLAMLVTEASEQEKKLNFHSFKLNLKNLVGTFITKHPDIFKRAMLSKITGIVYMEKFVSWWERALKEQEKVVEADERRKNYKEIKMEEGVVDDVKFDVILLKKDKERVQTIRDKIRDMIDIAIPKSTEKLIQSADSSLPTLQLHLYANVLRGRLSILNQNALEETRDVFCKEILGIHTSEFESDEALLLALDQGLNELLEHCKEKDNLESVDSIPELPRAEALCEALKVVAVFVFLDKMAFSRRAVDCLIANAITKFEQFEAKKNDFNRGTYEKYCDQIDLKFITDTLITFFSHKKHRFIYNENFKKLIFQASQAFPCDSKYAKMLGELHSSGRLQVMKLQGFTDSRNSILNAKRDQQFDPELETRLLMNSLTIMFSWMNAANRIGDAGNQILYKNWKREAANTRDPAIWRQVIRVASKLSQKILKDDAYTRARGQCTWALNLHFDYIEAKTVRKNGDLMEMIYLILEQSMGQEHSLFVTDEEYMKTQQEIGLQYSESGR.

2 disordered regions span residues 1 to 22 and 119 to 209; these read MFRA…ENPD and SVKS…HTLM. Positions 119 to 135 are enriched in polar residues; sequence SVKSLNGCQDPPETSQQ. Residues 164-184 show a composition bias toward basic residues; the sequence is QRSRSREKKRRKKERRRKRSS. A compositionally biased stretch (basic and acidic residues) spans 192–204; that stretch reads RSRDRSSRARDTS.

It belongs to the NRDE2 family. In terms of assembly, interacts with nrde-3.

It localises to the nucleus. It is found in the nucleus speckle. The protein resides in the nucleolus. In terms of biological role, protein of the nuclear speckles that regulates RNA exosomal degradation. Involved in short interfering RNAs-mediated silencing in nuclei. Functions with nrde-3 in the nuclear RNA-mediated gene silencing (RNAi) pathway to regulate gene expression via inhibition of RNA polymerases I and II during the elongation phase of transcription. Required for exogenous RNAi-induced H3K27 methylation. This chain is Nuclear exosome regulator NRDE2 (nrde-2), found in Caenorhabditis elegans.